The sequence spans 270 residues: Sec-independent protein translocase protein TatC (270 aa).

A run of 6 helical transmembrane segments spans residues 35–55, 93–113, 124–144, 176–196, 209–229, and 231–251; these read LILS…YRVQ, AFWA…WAFI, WGLP…VFGY, VVTF…AVIL, QGWR…TPTP, and PANM…GVVL.

The protein belongs to the TatC family. As to quaternary structure, forms a complex with TatA.

The protein localises to the cell membrane. Functionally, part of the twin-arginine translocation (Tat) system that transports large folded proteins containing a characteristic twin-arginine motif in their signal peptide across membranes. The chain is Sec-independent protein translocase protein TatC from Deinococcus radiodurans (strain ATCC 13939 / DSM 20539 / JCM 16871 / CCUG 27074 / LMG 4051 / NBRC 15346 / NCIMB 9279 / VKM B-1422 / R1).